A 99-amino-acid chain; its full sequence is Large ribosomal subunit protein bL27 (99 aa).

The propeptide occupies Met1–Phe10.

The protein belongs to the bacterial ribosomal protein bL27 family. The N-terminus is cleaved by ribosomal processing cysteine protease Prp.

In Caldicellulosiruptor bescii (strain ATCC BAA-1888 / DSM 6725 / KCTC 15123 / Z-1320) (Anaerocellum thermophilum), this protein is Large ribosomal subunit protein bL27.